A 108-amino-acid polypeptide reads, in one-letter code: DNA-binding protein HBbu (108 aa).

Belongs to the bacterial histone-like protein family.

Its function is as follows. Histone-like DNA-binding protein which is capable of wrapping DNA to stabilize it, and thus to prevent its denaturation under extreme environmental conditions. This chain is DNA-binding protein HBbu (hbb), found in Borrelia turicatae.